A 158-amino-acid polypeptide reads, in one-letter code: Small ribosomal subunit protein bS6 (158 aa).

The segment covering 92–149 (RVDEHEEGPSAMMRKADRDRERDDRGPREGGFRGDREGRGDRDGFRGDRGPRRPREDA) has biased composition (basic and acidic residues). The disordered stretch occupies residues 92–158 (RVDEHEEGPS…ADAPAAAVEE (67 aa)).

The protein belongs to the bacterial ribosomal protein bS6 family.

Functionally, binds together with bS18 to 16S ribosomal RNA. In Rhodopseudomonas palustris (strain ATCC BAA-98 / CGA009), this protein is Small ribosomal subunit protein bS6.